A 224-amino-acid chain; its full sequence is Transcription cofactor HES-6 (224 aa).

Residues Met-1–Pro-31 are disordered. Residues Ser-8 to Asp-25 are compositionally biased toward basic and acidic residues. Positions Asp-25–Ala-77 constitute a bHLH domain. Residues Phe-96–Leu-129 form the Orange domain. Residues Gly-146–Gly-209 form a disordered region. Residues Arg-158–Leu-171 are compositionally biased toward low complexity. Residues Leu-181–Glu-190 show a composition bias toward acidic residues. Positions Trp-221–Trp-224 match the WRPW motif motif.

In terms of assembly, transcription repression requires formation of a complex with a corepressor protein of the Groucho/TLE family. Interacts with HES1. In terms of tissue distribution, expressed in both undifferentiated and differentiated cells. High levels of expression are observed in several embryonic tissues including the nervous system, muscle and thymus. In the nervous system, initially expressed in the closing neural tube, then in the spinal cord, cranial and dorsal root ganglia, and brain neuroepithelium. Also expressed in epithelial cells of the embryonic respiratory, urinary and digestive systems. In the limb buds, expressed in skeletal muscle and presumptive tendons.

It is found in the nucleus. In terms of biological role, does not bind DNA itself but suppresses both HES1-mediated N box-dependent transcriptional repression and binding of HES1 to E box sequences. Also suppresses HES1-mediated inhibition of the heterodimer formed by ASCL1/MASH1 and TCF3/E47, allowing ASCL1 and TCF3 to up-regulate transcription in its presence. Promotes cell differentiation. The chain is Transcription cofactor HES-6 from Mus musculus (Mouse).